Here is a 44-residue protein sequence, read N- to C-terminus: MNELTLIDFYLCFLAFLLFLVLIMLIIFWFSLELQDIEEPCNKV.

A helical membrane pass occupies residues 9–29; that stretch reads FYLCFLAFLLFLVLIMLIIFW.

The protein localises to the host membrane. This Bat coronavirus Rp3/2004 (BtCoV/Rp3/2004) protein is Non-structural protein 7b.